A 224-amino-acid chain; its full sequence is Small ribosomal subunit protein uS3c (224 aa).

Positions 43–124 constitute a KH type-2 domain; the sequence is IKNYIQKNRK…RLNIAIEKVK (82 aa).

The protein belongs to the universal ribosomal protein uS3 family. As to quaternary structure, part of the 30S ribosomal subunit.

It localises to the plastid. The protein resides in the chloroplast. This is Small ribosomal subunit protein uS3c (rps3) from Saccharum hybrid (Sugarcane).